The following is a 180-amino-acid chain: Ribosome rescue factor SmrB (180 aa).

The Smr domain maps to 98-173 (LDLHGLTQLI…GDAALLLLVE (76 aa)).

This sequence belongs to the SmrB family. In terms of assembly, associates with collided ribosomes, but not with correctly translating polysomes.

Its function is as follows. Acts as a ribosome collision sensor. Detects stalled/collided disomes (pairs of ribosomes where the leading ribosome is stalled and a second ribosome has collided with it) and endonucleolytically cleaves mRNA at the 5' boundary of the stalled ribosome. Stalled/collided disomes form a new interface (primarily via the 30S subunits) that binds SmrB. Cleaved mRNA becomes available for tmRNA ligation, leading to ribosomal subunit dissociation and rescue of stalled ribosomes. In Proteus mirabilis (strain HI4320), this protein is Ribosome rescue factor SmrB.